The following is a 210-amino-acid chain: Neurotrophin-4 (210 aa).

Residues 1–24 (MLPLPSCSLPILLLFLLPSVPIES) form the signal peptide. Positions 25–80 (QPPPSTLPPFLAPEWDLLSPRVVLSRGAPAGPPLLFLLEAGAFRESAGAPANRSRR) are excised as a propeptide. N-linked (GlcNAc...) asparagine glycosylation is present at N76. Cystine bridges form between C97–C170, C141–C199, and C158–C201.

This sequence belongs to the NGF-beta family. In terms of tissue distribution, highest levels in prostate, lower levels in thymus, placenta, and skeletal muscle. Expressed in embryonic and adult tissues.

The protein resides in the secreted. Functionally, target-derived survival factor for peripheral sensory sympathetic neurons. May promote ameloblast differentiation and subsequent reduction in proliferation of ameloblasts. This chain is Neurotrophin-4 (NTF4), found in Homo sapiens (Human).